Here is an 830-residue protein sequence, read N- to C-terminus: Leucine--tRNA ligase (830 aa).

Positions 34–44 match the 'HIGH' region motif; the sequence is PYPSGNIHMGH. The 'KMSKS' region motif lies at 592-596; that stretch reads KMSKS. K595 contributes to the ATP binding site.

This sequence belongs to the class-I aminoacyl-tRNA synthetase family.

It localises to the cytoplasm. The catalysed reaction is tRNA(Leu) + L-leucine + ATP = L-leucyl-tRNA(Leu) + AMP + diphosphate. In Ehrlichia ruminantium (strain Welgevonden), this protein is Leucine--tRNA ligase.